Consider the following 107-residue polypeptide: uncharacterized protein (107 aa).

Positions 86–107 are disordered; that stretch reads KRAETARLPAATPQKRTGPARG.

This is an uncharacterized protein from Saccharomyces cerevisiae (strain ATCC 204508 / S288c) (Baker's yeast).